We begin with the raw amino-acid sequence, 140 residues long: Phosphoribosyl-AMP cyclohydrolase (140 aa).

Asp78 contacts Mg(2+). Cys79 is a binding site for Zn(2+). Residues Asp80 and Asp82 each contribute to the Mg(2+) site. Positions 96 and 103 each coordinate Zn(2+).

The protein belongs to the PRA-CH family. As to quaternary structure, homodimer. The cofactor is Mg(2+). Zn(2+) serves as cofactor.

It is found in the cytoplasm. It catalyses the reaction 1-(5-phospho-beta-D-ribosyl)-5'-AMP + H2O = 1-(5-phospho-beta-D-ribosyl)-5-[(5-phospho-beta-D-ribosylamino)methylideneamino]imidazole-4-carboxamide. It functions in the pathway amino-acid biosynthesis; L-histidine biosynthesis; L-histidine from 5-phospho-alpha-D-ribose 1-diphosphate: step 3/9. Functionally, catalyzes the hydrolysis of the adenine ring of phosphoribosyl-AMP. The sequence is that of Phosphoribosyl-AMP cyclohydrolase from Ralstonia pickettii (strain 12J).